The primary structure comprises 359 residues: Cytochrome c oxidase subunit 2 (359 aa).

The N-terminal stretch at 1–28 is a signal peptide; it reads MEQQNKRGLKRKALLGGVLGSGGLAMAG. A lipid anchor (N-palmitoyl cysteine) is attached at cysteine 29. Cysteine 29 carries the S-diacylglycerol cysteine lipid modification. A run of 2 helical transmembrane segments spans residues 64–84 and 107–127; these read VWVAAWIIGIIMWGLMLTAIF and VPLELVLTIVPIIIVMVLFFF. Residues histidine 244, cysteine 285, glutamate 287, cysteine 289, histidine 293, and methionine 296 each coordinate Cu cation. Positions 338 to 359 are disordered; sequence STAPFVSDRTGTRDGENFQTPA.

This sequence belongs to the cytochrome c oxidase subunit 2 family. In terms of assembly, associates with subunits I, III and IV to form cytochrome c oxidase. Binuclear copper center (CuA) is required as a cofactor.

It localises to the cell membrane. The enzyme catalyses 4 Fe(II)-[cytochrome c] + O2 + 8 H(+)(in) = 4 Fe(III)-[cytochrome c] + 2 H2O + 4 H(+)(out). Its function is as follows. Subunits I and II form the functional core of the enzyme complex. Electrons originating in cytochrome c are transferred via heme a and Cu(A) to the binuclear center formed by heme a3 and Cu(B). The chain is Cytochrome c oxidase subunit 2 (ctaC) from Corynebacterium efficiens (strain DSM 44549 / YS-314 / AJ 12310 / JCM 11189 / NBRC 100395).